We begin with the raw amino-acid sequence, 306 residues long: ORF-B protein (306 aa).

3 helical membrane-spanning segments follow: residues 92-112 (MIQWDYVFYLLPRVWIMFPFI), 120-140 (LTHLLTLTTSVLSATSLVFGW), and 161-181 (VIEWLAQFSFLFTHVTLIVVS).

Interacts with host RACK1.

It is found in the host cytoplasm. The protein resides in the host cell membrane. The protein is ORF-B protein of Sander vitreus (Walleye).